We begin with the raw amino-acid sequence, 310 residues long: MEAENHTTVAELIILGLTEDPKLCIVFFVIFLGVYIVTLVGNISIITLIRISSQLHTPMYLFLSHLAFVDILYSTSVSVIMHMELLGHGLALPVAACAAQLCITVSFGSAECFLLAAMAYDRYVAICSPLLYSTLMSPRVCFLLLGMSYVGGCMNGWTFTGCLLSLSFCGPNQIDHFFCDFSPLLKLSCSDVSIIGIIPSISSGSIIVVTVFVIAVSYIYILITILNMRSTEGRHKAFSTCTSHLTAVTLYYGTITFIYVMPKSNYSTEQNKVLSVFYTVVIPMLNPLIYSLRNRDVKEALRKATVRVYS.

Over Met-1–Ile-25 the chain is Extracellular. The N-linked (GlcNAc...) asparagine glycan is linked to Asn-5. The chain crosses the membrane as a helical span at residues Val-26–Ile-46. The Cytoplasmic segment spans residues Thr-47–Gln-54. A helical membrane pass occupies residues Leu-55–Thr-75. The Extracellular portion of the chain corresponds to Ser-76 to Ala-99. Cys-97 and Cys-189 are oxidised to a cystine. Residues Gln-100–Tyr-120 traverse the membrane as a helical segment. Residues Asp-121–Ser-133 lie on the Cytoplasmic side of the membrane. The chain crosses the membrane as a helical span at residues Thr-134–Met-154. The Extracellular segment spans residues Asn-155–Gly-196. Residues Ile-197–Ser-217 form a helical membrane-spanning segment. Residues Tyr-218–Ala-237 are Cytoplasmic-facing. A helical membrane pass occupies residues Phe-238 to Ile-258. The Extracellular segment spans residues Tyr-259–Asn-271. A glycan (N-linked (GlcNAc...) asparagine) is linked at Asn-265. Residues Lys-272 to Leu-292 form a helical membrane-spanning segment. Topologically, residues Arg-293–Ser-310 are cytoplasmic.

It belongs to the G-protein coupled receptor 1 family.

It localises to the cell membrane. Functionally, potential odorant receptor. This Mus musculus (Mouse) protein is Olfactory receptor 5P53.